The sequence spans 215 residues: Large ribosomal subunit protein uL3 (215 aa).

Positions 131–144 (SSSRASHGNSRSHN) are enriched in low complexity. Residues 131–150 (SSSRASHGNSRSHNVPGSIG) are disordered. Q153 carries the post-translational modification N5-methylglutamine.

This sequence belongs to the universal ribosomal protein uL3 family. Part of the 50S ribosomal subunit. Forms a cluster with proteins L14 and L19. Methylated by PrmB.

One of the primary rRNA binding proteins, it binds directly near the 3'-end of the 23S rRNA, where it nucleates assembly of the 50S subunit. In Nitrosomonas europaea (strain ATCC 19718 / CIP 103999 / KCTC 2705 / NBRC 14298), this protein is Large ribosomal subunit protein uL3.